Consider the following 132-residue polypeptide: Small ribosomal subunit protein uS8 (132 aa).

In terms of assembly, part of the 30S ribosomal subunit. Contacts proteins S5 and S12. In terms of processing, a modified and unmodified form exist; the nature of the modification(s) is unknown.

Functionally, one of the primary rRNA binding proteins, it binds directly to 16S rRNA central domain where it helps coordinate assembly of the platform of the 30S subunit. The sequence is that of Small ribosomal subunit protein uS8 from Rhodopseudomonas palustris (strain ATCC BAA-98 / CGA009).